The following is a 662-amino-acid chain: Pro-neuregulin-1, membrane-bound isoform (662 aa).

The propeptide occupies 1 to 13 (MSERKEGRGKGKG). The segment at 1–52 (MSERKEGRGKGKGKKKDRGSRGKPGPAEGDPSPALPPRLKEMKSQESAAGSK) is disordered. Topologically, residues 14–265 (KKKDRGSRGK…SKAEELYQKR (252 aa)) are extracellular. The Ig-like C2-type domain occupies 37-128 (PRLKEMKSQE…GNDSASANIT (92 aa)). Residues Cys57 and Cys112 are joined by a disulfide bond. 3 N-linked (GlcNAc...) asparagine glycosylation sites follow: Asn120, Asn126, and Asn164. Residues 178 to 222 (HLIKCAEKEKTFCVNGGECFTVKDLSNPSRYLCKCPNEFTGDRCQ) form the EGF-like domain. Disulfide bonds link Cys182–Cys196, Cys190–Cys210, and Cys212–Cys221. Residues 266 to 288 (VLTITGICIALLVVGIMCVVAYC) form a helical membrane-spanning segment. At 289-662 (KTKKQRQKLH…VIANQDPIAV (374 aa)) the chain is on the cytoplasmic side. The span at 358 to 373 (SHYTSTAHHSTTVTQT) shows a compositional bias: low complexity. Disordered regions lie at residues 358–383 (SHYT…NGHT), 398–480 (SVEN…PVSS), and 547–610 (YETT…DTPF). A compositionally biased stretch (polar residues) spans 374 to 383 (PSHSWSNGHT). A compositionally biased stretch (gly residues) spans 410–420 (GPRGRLHGLGG). The segment covering 425 to 445 (SFLRHARETPDSYRDSPHSER) has biased composition (basic and acidic residues). The span at 564-574 (TNSRRAKRTKP) shows a compositional bias: basic residues. Low complexity predominate over residues 585 to 596 (DSNTSSVSSNSE).

It belongs to the neuregulin family. As to quaternary structure, the cytoplasmic domain interacts with the LIM domain region of LIMK1. Forms a ternary complex with ERBB3 and ITGAV:ITGB3 or ITGA6:ITGB4. Interacts with NRDC and BACE1. In terms of processing, proteolytic cleavage close to the plasma membrane on the external face leads to the release of the soluble growth factor form. Post-translationally, N- and O-glycosylated. Extensive glycosylation precedes the proteolytic cleavage. Widely expressed. Most tissues contain isoform alpha2A and isoform alpha2B. Isoform Alpha2 and isoform beta2 are the predominant forms in mesenchymal and non-neuronal organs. Isoform Beta1 is enriched in brain and spinal cord, but not in muscle and heart. Isoform Alpha2C is highly expressed in spinal cord, moderately in lung, brain, ovary, and stomach, in low amounts in the kidney, skin and heart and not detected in the liver, spleen, and placenta.

Its subcellular location is the cell membrane. The protein resides in the secreted. Functionally, direct ligand for ERBB3 and ERBB4 tyrosine kinase receptors. Concomitantly recruits ERBB1 and ERBB2 coreceptors, resulting in ligand-stimulated tyrosine phosphorylation and activation of the ERBB receptors. The multiple isoforms perform diverse functions such as inducing growth and differentiation of epithelial, glial, neuronal, and skeletal muscle cells; inducing expression of acetylcholine receptor in synaptic vesicles during the formation of the neuromuscular junction; stimulating lobuloalveolar budding and milk production in the mammary gland and inducing differentiation of mammary tumor cells; stimulating Schwann cell proliferation; implication in the development of the myocardium such as trabeculation of the developing heart. Binds to ERBB4 and ERBB3. Acts as a ligand for integrins and binds (via EGF domain) to integrins ITGAV:ITGB3 or ITGA6:ITGB4. Its binding to integrins and subsequent ternary complex formation with integrins and ERRB3 are essential for NRG1-ERBB signaling. Induces the phosphorylation and activation of MAPK3/ERK1, MAPK1/ERK2 and AKT1, and ligand-dependent ERBB4 endocytosis is essential for the NRG1-mediated activation of these kinases in neurons. This Rattus norvegicus (Rat) protein is Pro-neuregulin-1, membrane-bound isoform (Nrg1).